The chain runs to 390 residues: Leu/Ile/Val-binding protein homolog 6 (390 aa).

Residues 1 to 21 form the signal peptide; sequence MKKIALTALAVFSLAASAAYA.

The protein belongs to the leucine-binding protein family.

In terms of biological role, component of an amino-acid transport system. The sequence is that of Leu/Ile/Val-binding protein homolog 6 from Brucella melitensis biotype 1 (strain ATCC 23456 / CCUG 17765 / NCTC 10094 / 16M).